The sequence spans 139 residues: Small ribosomal subunit protein uS12 (139 aa).

Residues 1-55 form a disordered region; it reads MPTINQLIRKGRKAKVKKSDSPALNKGYNSFKKVQTDLSSPQKRGVCTRVGTMTP. Positions 32–42 are enriched in polar residues; sequence KKVQTDLSSPQ.

Belongs to the universal ribosomal protein uS12 family. Part of the 30S ribosomal subunit. Contacts proteins S8 and S17. May interact with IF1 in the 30S initiation complex.

In terms of biological role, with S4 and S5 plays an important role in translational accuracy. Its function is as follows. Interacts with and stabilizes bases of the 16S rRNA that are involved in tRNA selection in the A site and with the mRNA backbone. Located at the interface of the 30S and 50S subunits, it traverses the body of the 30S subunit contacting proteins on the other side and probably holding the rRNA structure together. The combined cluster of proteins S8, S12 and S17 appears to hold together the shoulder and platform of the 30S subunit. This chain is Small ribosomal subunit protein uS12, found in Halalkalibacterium halodurans (strain ATCC BAA-125 / DSM 18197 / FERM 7344 / JCM 9153 / C-125) (Bacillus halodurans).